A 300-amino-acid polypeptide reads, in one-letter code: MKELIICNNIKLIKEEIHKKKIEISKRNNKEYYEIKVGFVPTMGYLHSGHISLVERAKLENDIVVVSIFVNPTQFNANEDLSSYPSDIENDSKLLKNVGTDLLFLPTPDIMYPKESGYSTFVTVESMEQVMEGKSRPGHFRGVATIVTKLLLITTPTNLYIGQKDAMQCICIKRLVADLNIDTNVIICNTIREDTGLAKSSRNSYLSNEEQIQASSIYKILESFKNNINSFTDRQSFINEITKQLEQNPLFKVEYVSIASNITGLEIIDQFPPPKDSNLSLALLFFAEKRKTRLIDIIIL.

43 to 50 (MGYLHSGH) lines the ATP pocket. H50 (proton donor) is an active-site residue. Q74 contributes to the (R)-pantoate binding site. Q74 contributes to the beta-alanine binding site. 162-165 (GQKD) lines the ATP pocket. Residue Q168 participates in (R)-pantoate binding. ATP-binding positions include I191 and 199–202 (KSSR).

Belongs to the pantothenate synthetase family. As to quaternary structure, homodimer.

It is found in the cytoplasm. It catalyses the reaction (R)-pantoate + beta-alanine + ATP = (R)-pantothenate + AMP + diphosphate + H(+). It functions in the pathway cofactor biosynthesis; (R)-pantothenate biosynthesis; (R)-pantothenate from (R)-pantoate and beta-alanine: step 1/1. Functionally, catalyzes the condensation of pantoate with beta-alanine in an ATP-dependent reaction via a pantoyl-adenylate intermediate. In Dictyostelium discoideum (Social amoeba), this protein is Pantoate--beta-alanine ligase (panC).